The primary structure comprises 311 residues: MISIADLREVFRGDVKISASLAEHSAFKIGGKADIVLKPLDKADAINVIKFFHEKQKPHIVLGRGSNVLISDDGVREAVILLSGCLEKVDINGELVYAEAGVDLQKLAVQSLNHRLGGLEAFSGVPGSVGGAIVMNAGAHGHEIFELIDWVEVVRDGSLKKLRKNEIKARYRETDLAQDTVLSARLKLKPISEKEQAECFERRRELMEKRRNSQPLSLPNVGSIFKNPPPYNGESRQFAGQLIEACGLKGVREGGAMISDKHANFIVNLGNATASDVLALIELAKTKVRLRFGIDLELEIKLIGFTEHVEK.

One can recognise an FAD-binding PCMH-type domain in the interval 29-191 (IGGKADIVLK…LSARLKLKPI (163 aa)). The active site involves arginine 172. Serine 223 functions as the Proton donor in the catalytic mechanism. Residue glutamate 299 is part of the active site.

This sequence belongs to the MurB family. FAD is required as a cofactor.

The protein localises to the cytoplasm. The enzyme catalyses UDP-N-acetyl-alpha-D-muramate + NADP(+) = UDP-N-acetyl-3-O-(1-carboxyvinyl)-alpha-D-glucosamine + NADPH + H(+). The protein operates within cell wall biogenesis; peptidoglycan biosynthesis. Cell wall formation. The polypeptide is UDP-N-acetylenolpyruvoylglucosamine reductase (Chloroherpeton thalassium (strain ATCC 35110 / GB-78)).